The primary structure comprises 87 residues: Large ribosomal subunit protein bL27 (87 aa).

The interval 1–24 (MAHKKGTGSTRNGRDSRSQRLGVK) is disordered.

The protein belongs to the bacterial ribosomal protein bL27 family.

The protein is Large ribosomal subunit protein bL27 of Crocosphaera subtropica (strain ATCC 51142 / BH68) (Cyanothece sp. (strain ATCC 51142)).